A 315-amino-acid polypeptide reads, in one-letter code: Leukocidin-S subunit (315 aa).

The N-terminal stretch at 1 to 29 (MLKNKILATTLSVSLLAPLANPLLENAKA) is a signal peptide.

It belongs to the aerolysin family. In terms of assembly, leukocidin consists of two protein components: F and S.

In terms of biological role, leukocidin causes cytotoxic changes in polymorphonuclear leukocytes. The polypeptide is Leukocidin-S subunit (lukS) (Staphylococcus aureus).